A 274-amino-acid chain; its full sequence is HTH-type transcriptional regulator GadX (274 aa).

The region spanning Thr-145–Arg-242 is the HTH araC/xylS-type domain. 2 DNA-binding regions (H-T-H motif) span residues Ala-162–Gly-183 and Ile-209–Tyr-232.

Homodimer.

Functionally, positively regulates the expression of about fifteen genes involved in acid resistance such as gadA, gadB and gadC. Depending on the conditions (growth phase and medium), can repress gadW. This is HTH-type transcriptional regulator GadX (gadX) from Escherichia coli O6:H1 (strain CFT073 / ATCC 700928 / UPEC).